The sequence spans 452 residues: Cobyrinate a,c-diamide synthase (452 aa).

The GATase cobBQ-type domain maps to 248–441 (RVAYALDAAF…LHIHFYQNPA (194 aa)). The active-site Nucleophile is the Cys330.

This sequence belongs to the CobB/CbiA family. The cofactor is Mg(2+).

The enzyme catalyses cob(II)yrinate + 2 L-glutamine + 2 ATP + 2 H2O = cob(II)yrinate a,c diamide + 2 L-glutamate + 2 ADP + 2 phosphate + 2 H(+). Its pathway is cofactor biosynthesis; adenosylcobalamin biosynthesis; cob(II)yrinate a,c-diamide from sirohydrochlorin (anaerobic route): step 10/10. Catalyzes the ATP-dependent amidation of the two carboxylate groups at positions a and c of cobyrinate, using either L-glutamine or ammonia as the nitrogen source. The polypeptide is Cobyrinate a,c-diamide synthase (Listeria innocua serovar 6a (strain ATCC BAA-680 / CLIP 11262)).